Consider the following 512-residue polypeptide: GMP synthase [glutamine-hydrolyzing] (512 aa).

A Glutamine amidotransferase type-1 domain is found at 7 to 197 (LVLVVDFGGQ…LFKVAGLKAD (191 aa)). The Nucleophile role is filled by cysteine 84. Residues histidine 171 and glutamate 173 contribute to the active site. Positions 198-387 (WSMASFAEEK…LGIPHKLVWR (190 aa)) constitute a GMPS ATP-PPase domain. ATP is bound at residue 225–231 (SGGVDSS).

As to quaternary structure, homodimer.

It carries out the reaction XMP + L-glutamine + ATP + H2O = GMP + L-glutamate + AMP + diphosphate + 2 H(+). Its pathway is purine metabolism; GMP biosynthesis; GMP from XMP (L-Gln route): step 1/1. Its function is as follows. Catalyzes the synthesis of GMP from XMP. This chain is GMP synthase [glutamine-hydrolyzing], found in Clostridium novyi (strain NT).